The following is a 492-amino-acid chain: G2/mitotic-specific cyclin CYB1 (492 aa).

The segment at Met1–Ser176 is disordered. A compositionally biased stretch (polar residues) spans Gln23 to Thr33. Residues Ile34–Ser58 show a composition bias toward low complexity. The span at Glu59 to Pro83 shows a compositional bias: polar residues. The span at Ala111–Asn135 shows a compositional bias: low complexity.

Belongs to the cyclin family. Cyclin AB subfamily.

Essential for the control of the cell cycle at the G2/M (mitosis) transition. Interacts with the CDC2 protein kinase to form MPF. G2/M cyclins accumulate steadily during G2 and are abruptly destroyed at mitosis. This chain is G2/mitotic-specific cyclin CYB1 (CYB1), found in Candida albicans (Yeast).